A 160-amino-acid polypeptide reads, in one-letter code: Endoribonuclease YbeY (160 aa).

Residues His123, His127, and His133 each coordinate Zn(2+).

Belongs to the endoribonuclease YbeY family. It depends on Zn(2+) as a cofactor.

It localises to the cytoplasm. Functionally, single strand-specific metallo-endoribonuclease involved in late-stage 70S ribosome quality control and in maturation of the 3' terminus of the 16S rRNA. The protein is Endoribonuclease YbeY of Roseiflexus sp. (strain RS-1).